The chain runs to 100 residues: Signal recognition particle 19 kDa protein (100 aa).

This sequence belongs to the SRP19 family. Part of the signal recognition particle protein translocation system, which is composed of SRP and FtsY. Archaeal SRP consists of a 7S RNA molecule of 300 nucleotides and two protein subunits: SRP54 and SRP19.

It is found in the cytoplasm. Functionally, involved in targeting and insertion of nascent membrane proteins into the cytoplasmic membrane. Binds directly to 7S RNA and mediates binding of the 54 kDa subunit of the SRP. This is Signal recognition particle 19 kDa protein from Pyrococcus furiosus (strain ATCC 43587 / DSM 3638 / JCM 8422 / Vc1).